The following is a 143-amino-acid chain: Type II secretion system core protein G (143 aa).

A propeptide spans 1 to 17 (leader sequence); that stretch reads MIKRSITRSPSRAGQAG. Position 18 is an N-methylmethionine (Met18). The chain crosses the membrane as a helical span at residues 18–38; sequence MSLLEIIIVIVLIGAVLTLVG.

It belongs to the GSP G family. As to quaternary structure, type II secretion system is composed of four main components: the outer membrane complex, the inner membrane complex, the cytoplasmic secretion ATPase and the periplasm-spanning pseudopilus. Forms homomultimers. Interacts with pseudopilin tip complex component XpsJ as well as XpsI and XcpH. Interacts with XpsN and secretin XpsD. Post-translationally, cleaved by the prepilin peptidase. In terms of processing, methylated by prepilin peptidase at the amino group of the N-terminal methionine once the leader sequence is cleaved.

It localises to the cell inner membrane. Functionally, core component of the type II secretion system required for the energy-dependent secretion of extracellular factors such as proteases and toxins from the periplasm. Pseudopilin (pilin-like) protein that polymerizes to form the pseudopilus. Further polymerization triggers pseudopilus growth. The sequence is that of Type II secretion system core protein G (xpsG) from Xanthomonas campestris pv. campestris (strain ATCC 33913 / DSM 3586 / NCPPB 528 / LMG 568 / P 25).